The primary structure comprises 517 residues: Glucose-6-phosphate isomerase (517 aa).

The Proton donor role is filled by Glu-345. Residues His-376 and Lys-490 contribute to the active site.

It belongs to the GPI family.

The protein localises to the cytoplasm. It carries out the reaction alpha-D-glucose 6-phosphate = beta-D-fructose 6-phosphate. The protein operates within carbohydrate biosynthesis; gluconeogenesis. Its pathway is carbohydrate degradation; glycolysis; D-glyceraldehyde 3-phosphate and glycerone phosphate from D-glucose: step 2/4. Catalyzes the reversible isomerization of glucose-6-phosphate to fructose-6-phosphate. The protein is Glucose-6-phosphate isomerase of Erythrobacter litoralis (strain HTCC2594).